We begin with the raw amino-acid sequence, 954 residues long: MKSEVSSDAPKRQENLKGVLLNPEAIGASKSFPKEVEMIASKVSNEFSHLCSDTNKQQRDLNSNGTEQEKNLVVHKKRKNQQAGTSYAQSCEVKENQRLLRLQPQSDEDNDSSFSDCISSPSSSSHFGDSDTMTSDEDKDNPRRYSPAGVNATPRTQSARAQKWPRPHTDSVSSLVMKRPCYQVSSLRRPLHRKRFVKNVSSQRTQKQKERMMLQRKKREVLARQKYALLPSSSSSSENDLSSESSSSSSTEGEEDLFVSPGENHQDGTTLPSGGMDEDVVVIEASSTPQVTANEEINVTSTDSEVEIVTVGETYRSRTTLGHPRSHWGQNTQSGRTQEQRTRNRVSTVIQPLRQNTTEVVDLTVDEDDPTVVPTTSGRVESQPVSTVSSNTSTSEPASDSASGPLGSRGSAIPEIPPIPPNSNTVGTIADDSRTSTSGTNVDGGPPAMPRLPSCCPQHSPCGGSSQNHVLGHPHSSCFPPHSHHFPHHHHHHHQSSHPGVPLSPSFRDSHCPVERNAAVPPPCGATSSSGSTYHDPQALPVDLSNNGIRSHGSVSFHSTSAFDPCCPGSSSRSTVYGHQSTTSTAQTMAIDGYGSSMVAQAQPPPPTPLSSCRHYMHAPYTSLTRPLHHQTSSCPHSHSNVGDYVIAHQVPFISPLPSLAATHAVPPPPPSHHLSTAAAPQHLSTSHQSMSHHISATAPATQRLHTHEVIQRMEVQRRRMMQHPTRAHERPPPHPHRMHPNYGHGHHIHVPQTMSSHPRQGPERSAWEIAIETGVTAAPYQTGPLHTHLAHYHAPPRLHHLQIGALPLMVPDMAGYPHIRYISSGLDGRSFRVPFRGNFEELIHLEERLGNVNRGASQGTIERCTYPHKYEKVSTDWFSQRKLHSKQDGEEATEEDTEEKCTICLSILEEGEDVRRLPCMHLFHQVCVDQWLITNKKCPICRVDIDTQLPTES.

The segment covering 50–66 has biased composition (polar residues); that stretch reads LCSDTNKQQRDLNSNGT. 2 disordered regions span residues 50–175 and 193–276; these read LCSD…VSSL and RKRF…SGGM. Low complexity-rich tracts occupy residues 112-131 and 232-251; these read SSFS…GDSD and SSSS…SSST. Residues 280 to 284 carry the SUMO interaction motif 1 (SIM) motif; sequence VVVIE. Positions 305–311 match the SUMO interaction motif 2 (SIM) motif; that stretch reads EVEIVTV. Disordered stretches follow at residues 318 to 346, 364 to 452, and 485 to 509; these read RTTL…RNRV, TVDE…MPRL, and HFPH…SFRD. Polar residues predominate over residues 328 to 337; it reads WGQNTQSGRT. The short motif at 360-364 is the SUMO interaction motif 3 (SIM) element; the sequence is VVDLT. Over residues 385–395 the composition is skewed to low complexity; that stretch reads VSTVSSNTSTS. Basic residues predominate over residues 485 to 496; that stretch reads HFPHHHHHHHQS. Positions 867–869 are ubiquitin binding; sequence YPH. The Zn(2+) site is built by Cys-902 and Cys-905. The segment at 902–943 adopts an RING-type; atypical zinc-finger fold; it reads CTICLSILEEGEDVRRLPCMHLFHQVCVDQWLITNKKCPICR. A ubiquitin binding region spans residues 917-921; sequence RLPCM. Residues His-925 and Cys-928 each contribute to the Zn(2+) site.

It belongs to the Arkadia family. In terms of assembly, monomer.

It is found in the nucleus. It localises to the cytoplasm. The protein resides in the PML body. The enzyme catalyses S-ubiquitinyl-[E2 ubiquitin-conjugating enzyme]-L-cysteine + [acceptor protein]-L-lysine = [E2 ubiquitin-conjugating enzyme]-L-cysteine + N(6)-ubiquitinyl-[acceptor protein]-L-lysine.. It participates in protein modification; protein ubiquitination. With respect to regulation, binds free ubiquitin non-covalently via its RING-type zinc finger. Ubiquitin-binding leads to enhance the E3 ubiquitin-protein ligase activity by stabilizing the ubiquitin-conjugating enzyme E2 (donor ubiquitin) in the 'closed' conformation and activating ubiquitin transfer. Functionally, E3 ubiquitin-protein ligase required for mesoderm patterning during embryonic development. Acts as an enhancer of the transcriptional responses of the smad2/smad3 effectors, which are activated downstream of BMP. Acts by mediating ubiquitination and degradation of SMAD inhibitors such as smad7, inducing their proteasomal degradation and thereby enhancing the transcriptional activity of TGF-beta and BMP. Specifically binds polysumoylated chains via SUMO interaction motifs (SIMs) and mediates ubiquitination of sumoylated substrates. The regulation of the BMP-SMAD signaling is however independent of sumoylation and is not dependent of SUMO interaction motifs (SIMs). The protein is E3 ubiquitin-protein ligase arkadia (rnf111) of Xenopus tropicalis (Western clawed frog).